The following is a 287-amino-acid chain: Diaminopimelate epimerase (287 aa).

2 residues coordinate substrate: Asn-15 and Asn-66. Residue Cys-75 is the Proton donor of the active site. Residues 76–77, Asn-170, Asn-203, and 221–222 contribute to the substrate site; these read GN and ER. Cys-230 functions as the Proton acceptor in the catalytic mechanism. 231-232 contacts substrate; it reads GT.

The protein belongs to the diaminopimelate epimerase family. Homodimer.

It is found in the cytoplasm. The enzyme catalyses (2S,6S)-2,6-diaminopimelate = meso-2,6-diaminopimelate. Its pathway is amino-acid biosynthesis; L-lysine biosynthesis via DAP pathway; DL-2,6-diaminopimelate from LL-2,6-diaminopimelate: step 1/1. Catalyzes the stereoinversion of LL-2,6-diaminopimelate (L,L-DAP) to meso-diaminopimelate (meso-DAP), a precursor of L-lysine and an essential component of the bacterial peptidoglycan. The sequence is that of Diaminopimelate epimerase from Desulfovibrio desulfuricans (strain ATCC 27774 / DSM 6949 / MB).